We begin with the raw amino-acid sequence, 130 residues long: Iron-sulfur cluster insertion protein ErpA (130 aa).

Positions 46, 116, and 118 each coordinate iron-sulfur cluster.

Belongs to the HesB/IscA family. As to quaternary structure, homodimer. The cofactor is iron-sulfur cluster.

Its function is as follows. Required for insertion of 4Fe-4S clusters for at least IspG. The polypeptide is Iron-sulfur cluster insertion protein ErpA (Legionella pneumophila (strain Lens)).